Consider the following 471-residue polypeptide: Cysteine--tRNA ligase (471 aa).

Cys-30 is a binding site for Zn(2+). Positions 32-42 match the 'HIGH' region motif; it reads PTVYNFAHIGN. Cys-212, His-237, and Glu-241 together coordinate Zn(2+). Residues 270 to 274 carry the 'KMSKS' region motif; that stretch reads KMSKS. An ATP-binding site is contributed by Lys-273.

Belongs to the class-I aminoacyl-tRNA synthetase family. As to quaternary structure, monomer. It depends on Zn(2+) as a cofactor.

The protein localises to the cytoplasm. The catalysed reaction is tRNA(Cys) + L-cysteine + ATP = L-cysteinyl-tRNA(Cys) + AMP + diphosphate. This chain is Cysteine--tRNA ligase, found in Leptospira interrogans serogroup Icterohaemorrhagiae serovar Lai (strain 56601).